A 96-amino-acid chain; its full sequence is Large ribosomal subunit protein eL30 (96 aa).

It belongs to the eukaryotic ribosomal protein eL30 family.

This Methanosphaerula palustris (strain ATCC BAA-1556 / DSM 19958 / E1-9c) protein is Large ribosomal subunit protein eL30.